We begin with the raw amino-acid sequence, 117 residues long: Holo-[acyl-carrier-protein] synthase (117 aa).

Residues aspartate 8 and glutamate 57 each contribute to the Mg(2+) site.

The protein belongs to the P-Pant transferase superfamily. AcpS family. Requires Mg(2+) as cofactor.

The protein localises to the cytoplasm. The enzyme catalyses apo-[ACP] + CoA = holo-[ACP] + adenosine 3',5'-bisphosphate + H(+). Functionally, transfers the 4'-phosphopantetheine moiety from coenzyme A to a Ser of acyl-carrier-protein. The protein is Holo-[acyl-carrier-protein] synthase of Limosilactobacillus reuteri (Lactobacillus reuteri).